The sequence spans 101 residues: Large ribosomal subunit protein uL24 (101 aa).

The protein belongs to the universal ribosomal protein uL24 family. In terms of assembly, part of the 50S ribosomal subunit.

One of two assembly initiator proteins, it binds directly to the 5'-end of the 23S rRNA, where it nucleates assembly of the 50S subunit. In terms of biological role, one of the proteins that surrounds the polypeptide exit tunnel on the outside of the subunit. The protein is Large ribosomal subunit protein uL24 of Paracoccus denitrificans (strain Pd 1222).